The following is a 147-amino-acid chain: Mitochondrial import receptor subunit TOM20 homolog (147 aa).

The Mitochondrial intermembrane portion of the chain corresponds to 1–3 (MVV). Residues 4 to 26 (VGKTSAIAAGVCGALFLGYCIYF) form a helical membrane-spanning segment. Over 27–147 (DRKRRSDPNF…AQNLAEDDVE (121 aa)) the chain is Cytoplasmic.

Belongs to the Tom20 family. As to quaternary structure, forms part of the preprotein translocase complex of the outer mitochondrial membrane (TOM complex). Interacts with tom22.

Its subcellular location is the mitochondrion outer membrane. In terms of biological role, central component of the receptor complex responsible for the recognition and translocation of cytosolically synthesized mitochondrial preproteins. Together with tom22 functions as the transit peptide receptor at the surface of the mitochondrion outer membrane and facilitates the movement of preproteins into the tom40 translocation pore. The polypeptide is Mitochondrial import receptor subunit TOM20 homolog (tomm20) (Xenopus tropicalis (Western clawed frog)).